The chain runs to 298 residues: tRNA dimethylallyltransferase 2 (298 aa).

19 to 26 is a binding site for ATP; sequence GATATGKT. 21 to 26 lines the substrate pocket; sequence TATGKT. The tract at residues 44–47 is interaction with substrate tRNA; that stretch reads DSRQ.

It belongs to the IPP transferase family. As to quaternary structure, monomer. Mg(2+) serves as cofactor.

The enzyme catalyses adenosine(37) in tRNA + dimethylallyl diphosphate = N(6)-dimethylallyladenosine(37) in tRNA + diphosphate. Catalyzes the transfer of a dimethylallyl group onto the adenine at position 37 in tRNAs that read codons beginning with uridine, leading to the formation of N6-(dimethylallyl)adenosine (i(6)A). This is tRNA dimethylallyltransferase 2 from Treponema denticola (strain ATCC 35405 / DSM 14222 / CIP 103919 / JCM 8153 / KCTC 15104).